A 163-amino-acid polypeptide reads, in one-letter code: Protein-export protein SecB (163 aa).

This sequence belongs to the SecB family. In terms of assembly, homotetramer, a dimer of dimers. One homotetramer interacts with 1 SecA dimer.

Its subcellular location is the cytoplasm. One of the proteins required for the normal export of preproteins out of the cell cytoplasm. It is a molecular chaperone that binds to a subset of precursor proteins, maintaining them in a translocation-competent state. It also specifically binds to its receptor SecA. The polypeptide is Protein-export protein SecB (Azotobacter vinelandii (strain DJ / ATCC BAA-1303)).